A 477-amino-acid polypeptide reads, in one-letter code: M-phase inducer phosphatase 3 (477 aa).

The disordered stretch occupies residues 1-20 (MSAEFFSSKREEGSLASGPS). Serine 2 carries the N-acetylserine modification. Serine 20 and serine 38 each carry phosphoserine. Residue threonine 48 is modified to Phosphothreonine; by CDK1. 3 positions are modified to phosphoserine: serine 58, serine 62, and serine 65. Position 68 is a phosphothreonine; by CDK1 (threonine 68). Serine 123 carries the phosphoserine; by CDK1 modification. Phosphoserine is present on serine 130. Threonine 131 is subject to Phosphothreonine. Position 169 is a phosphoserine; by CDK1 (serine 169). Phosphoserine; by PLK3 is present on residues serine 192 and serine 199. Serine 218 is modified (phosphoserine; by CDK1). Phosphoserine; by CHEK1, CHEK2, BRSK1, MAPK14 AND MARK3 is present on serine 220. Residues 325-432 (LIEKFYIIDC…FFPEYMELCE (108 aa)) form the Rhodanese domain. Residue cysteine 381 is part of the active site. The residue at position 476 (serine 476) is a Phosphoserine.

It belongs to the MPI phosphatase family. Interacts with MAPK14 and 14-3-3 proteins. When phosphorylated on Ser-130 and/or Thr-131, interacts with PLK1. Interacts with MARK3/C-TAK1. Phosphorylated by CHEK1 and MAPK14 at Ser-220. This phosphorylation creates a binding site for 14-3-3 protein and inhibits the phosphatase. Phosphorylated by PLK4. Phosphorylated by PLK1, leading to activate the phosphatase activity. Phosphorylation by PLK3 at Ser-192 promotes nuclear translocation. Ser-199 is a minor phosphorylation site. Phosphorylation by CDK1 occurs at G2 and G2-M transition and leads to increased activity.

Its subcellular location is the nucleus. It catalyses the reaction O-phospho-L-tyrosyl-[protein] + H2O = L-tyrosyl-[protein] + phosphate. Functions as a dosage-dependent inducer in mitotic control. Tyrosine protein phosphatase required for progression of the cell cycle. When phosphorylated, highly effective in activating G2 cells into prophase. Directly dephosphorylates CDK1 and activates its kinase activity. In Bos taurus (Bovine), this protein is M-phase inducer phosphatase 3 (CDC25C).